Reading from the N-terminus, the 640-residue chain is MKNKNSEQNTHYTIGEQDIHYFHEGKHIYAYEFMGAHKACEEGIEGIRFTTWAPNAKSICVIGDFNYWQVEDKNYMEPITDAGLWSVFIPNAKNGDKYKFVVTNKDTSHYVYKSDPYAFFSELRPNTASIITTETQYTWSDDKWLEKRAKTNYYDNPMNVYELHLASWKTKNGKFLTYDELSETLPQYIKEMGYTHVEFMPLHEHPLDASWGYQPTGFYSVNSRHGDIIGLKRLVDKLHNNDIGVILDWVPGHFCKDQHGLIYFDGSPCYEYQEPTKAINKGWETHNFDLGRNEVKCFLISNAMYWINEFHIDGLRVDAVSNILYLNYDREDGQWIPNIYGGHENLEGIAFLKELNGVLKHTCKGVITIAEESSSWPDISTPVEKGGLGFDFKWNMGWMNDTLRYISLDPVYRKYHHNLITFSMVYHYSEKFILSISHDEVVHGKKSLINKMWGDLWNKYAGLRLYMSYMIGHPGKKLIFMGSEFVQFVEWREYEQLQWQVVDQYESHKQTLHFFKKLNDFYHNETALWQCDYDHHGFRWIDANNSQQSILSFIRSSKDNKQKLIFICNFTPVTYYDYHLGVPDAGSYKEVFNSDNLEFGGSGQVMATEIFSSPQSSHGFEQRITIKIPPMATLVLKLIK.

Aspartate 318 acts as the Nucleophile in catalysis. Glutamate 371 (proton donor) is an active-site residue.

The protein belongs to the glycosyl hydrolase 13 family. GlgB subfamily. As to quaternary structure, monomer.

The catalysed reaction is Transfers a segment of a (1-&gt;4)-alpha-D-glucan chain to a primary hydroxy group in a similar glucan chain.. It functions in the pathway glycan biosynthesis; glycogen biosynthesis. In terms of biological role, catalyzes the formation of the alpha-1,6-glucosidic linkages in glycogen by scission of a 1,4-alpha-linked oligosaccharide from growing alpha-1,4-glucan chains and the subsequent attachment of the oligosaccharide to the alpha-1,6 position. This Francisella tularensis subsp. holarctica (strain FTNF002-00 / FTA) protein is 1,4-alpha-glucan branching enzyme GlgB.